A 201-amino-acid polypeptide reads, in one-letter code: Recombination protein RecR (201 aa).

Residues 57 to 72 (CRYCRNLSDAEVCLLC) form a C4-type zinc finger. The Toprim domain occupies 80 to 175 (QQICVVETPA…QATRLAYGVP (96 aa)).

It belongs to the RecR family.

May play a role in DNA repair. It seems to be involved in an RecBC-independent recombinational process of DNA repair. It may act with RecF and RecO. The chain is Recombination protein RecR from Dichelobacter nodosus (strain VCS1703A).